Consider the following 445-residue polypeptide: Exodeoxyribonuclease 7 large subunit (445 aa).

It belongs to the XseA family. As to quaternary structure, heterooligomer composed of large and small subunits.

The protein localises to the cytoplasm. The enzyme catalyses Exonucleolytic cleavage in either 5'- to 3'- or 3'- to 5'-direction to yield nucleoside 5'-phosphates.. Bidirectionally degrades single-stranded DNA into large acid-insoluble oligonucleotides, which are then degraded further into small acid-soluble oligonucleotides. This chain is Exodeoxyribonuclease 7 large subunit, found in Xanthomonas oryzae pv. oryzae (strain PXO99A).